Reading from the N-terminus, the 212-residue chain is ATP-dependent dethiobiotin synthetase BioD (212 aa).

Gly13–Val18 is an ATP binding site. Thr17 contributes to the Mg(2+) binding site. Lys33 is a catalytic residue. Ser37 provides a ligand contact to substrate. Position 100 (Glu100) interacts with Mg(2+). ATP-binding positions include Glu100–Gly103 and Pro184–Leu186.

It belongs to the dethiobiotin synthetase family. Homodimer. Mg(2+) is required as a cofactor.

It is found in the cytoplasm. The catalysed reaction is (7R,8S)-7,8-diammoniononanoate + CO2 + ATP = (4R,5S)-dethiobiotin + ADP + phosphate + 3 H(+). It participates in cofactor biosynthesis; biotin biosynthesis; biotin from 7,8-diaminononanoate: step 1/2. Its function is as follows. Catalyzes a mechanistically unusual reaction, the ATP-dependent insertion of CO2 between the N7 and N8 nitrogen atoms of 7,8-diaminopelargonic acid (DAPA, also called 7,8-diammoniononanoate) to form a ureido ring. This chain is ATP-dependent dethiobiotin synthetase BioD, found in Brucella canis (strain ATCC 23365 / NCTC 10854 / RM-666).